Reading from the N-terminus, the 525-residue chain is Cytochrome P450 714A2 (525 aa).

The Lumenal portion of the chain corresponds to 1–3 (MES). The helical; Signal-anchor for type III membrane protein transmembrane segment at 4–24 (LVVHTVNAIWCIVIVGIFSVG) threads the bilayer. Topologically, residues 25–525 (YHVYGRAVVE…PQHGVVIRVV (501 aa)) are cytoplasmic. Cysteine 475 lines the heme pocket.

This sequence belongs to the cytochrome P450 family. Requires heme as cofactor. Expressed in the shoot apical meristem (SAM) and petioles of young leaves, in the leaf margin and petiole vein of cotyledons, and at low levels in the filaments of developing flowers. Not detected in siliques.

Its subcellular location is the endoplasmic reticulum membrane. Its function is as follows. Involved in the inactivation of early gibberellin (GA) intermediates. The chain is Cytochrome P450 714A2 (CYP714A2) from Arabidopsis thaliana (Mouse-ear cress).